The following is a 622-amino-acid chain: 3-(3-hydroxy-phenyl)propionate/3-hydroxycinnamic acid hydroxylase (622 aa).

Residues 20–49 (DVAI…VLEK) and 288–298 (FRVDRVLLAGD) contribute to the FAD site.

This sequence belongs to the PheA/TfdB FAD monooxygenase family. FAD serves as cofactor.

The enzyme catalyses 3-(3-hydroxyphenyl)propanoate + NADH + O2 + H(+) = 3-(2,3-dihydroxyphenyl)propanoate + NAD(+) + H2O. The catalysed reaction is (2E)-3-(3-hydroxyphenyl)prop-2-enoate + NADH + O2 + H(+) = (2E)-3-(2,3-dihydroxyphenyl)prop-2-enoate + NAD(+) + H2O. It participates in aromatic compound metabolism; 3-phenylpropanoate degradation. In terms of biological role, catalyzes the insertion of one atom of molecular oxygen into position 2 of the phenyl ring of 3-(3-hydroxyphenyl)propionate (3-HPP) and hydroxycinnamic acid (3HCI). In Paraburkholderia xenovorans (strain LB400), this protein is 3-(3-hydroxy-phenyl)propionate/3-hydroxycinnamic acid hydroxylase.